Reading from the N-terminus, the 678-residue chain is uncharacterized protein (678 aa).

The interval 1–26 (MGVHFDDNANTTWEATDPGVSSDCDG) is disordered. 9 consecutive transmembrane segments (helical) span residues 119–139 (LLLLIVYCCFWMRIFYSLIYP), 245–265 (SFPCASAVHAGVISPFYGGCT), 317–337 (AAVVALNMLFGLPIFYLYDSI), 340–360 (YWINTIVGYWTLVLSLDPPLL), 371–391 (ELFSVGFQRLLPLCFVLYVVW), 405–425 (IAKVILWYPTFWLGISNNVTF), 443–463 (GALTAVGSIAATILTCAVIQA), 475–495 (YFKIYICFIGGLIALGSLPGL), and 519–539 (AYLFQGILVGLILSGVARWDF).

It is found in the vacuole membrane. This is an uncharacterized protein from Saccharomyces cerevisiae (strain ATCC 204508 / S288c) (Baker's yeast).